Consider the following 90-residue polypeptide: uncharacterized protein (90 aa).

To E.coli RlpA.

This is an uncharacterized protein from Synechocystis sp. (strain ATCC 27184 / PCC 6803 / Kazusa).